The sequence spans 574 residues: Sorting nexin-33 (574 aa).

Residues 1–61 enclose the SH3 domain; the sequence is MALKGRALYD…PASYVEIVRS (61 aa). The segment at 68-119 is disordered; sequence ADYSSSPAGSPGAQVSLYNSPSVASPARSGGGSGFLSNQGSFEEDDDDDWDD. Phosphoserine occurs at positions 77 and 92. Residues 109 to 119 show a composition bias toward acidic residues; the sequence is FEEDDDDDWDD. One can recognise a PX domain in the interval 230-340; that stretch reads FACSVEDPTK…HFLSCLDDKQ (111 aa). The region spanning 371 to 574 is the BAR domain; that stretch reads LQDVEDRVDT…EKTLRMYDNL (204 aa).

This sequence belongs to the sorting nexin family. In terms of assembly, homodimer (via BAR domain). Interacts with ADAM15. Interacts with FASLG. Interacts (via SH3 domain) with DNM1 and DNM2. Interacts with WASL. Interacts with FCHSD1 (via the F-BAR domain). In terms of processing, phosphorylated. In terms of tissue distribution, detected in heart and pancreas.

It is found in the cytoplasm. The protein localises to the cytosol. The protein resides in the membrane. It localises to the cytoplasmic vesicle membrane. In terms of biological role, plays a role in the reorganization of the cytoskeleton, endocytosis and cellular vesicle trafficking via its interactions with membranes, WASL, DNM1 and DNM2. Acts both during interphase and at the end of mitotic cell divisions. Required for efficient progress through mitosis and cytokinesis. Required for normal formation of the cleavage furrow at the end of mitosis. Modulates endocytosis of cell-surface proteins, such as APP and PRNP; this then modulates the secretion of APP and PRNP peptides. Promotes membrane tubulation (in vitro). May promote the formation of macropinosomes. This Homo sapiens (Human) protein is Sorting nexin-33 (SNX33).